The following is a 216-amino-acid chain: Large ribosomal subunit protein uL3 (216 aa).

At Gln153 the chain carries N5-methylglutamine.

Belongs to the universal ribosomal protein uL3 family. As to quaternary structure, part of the 50S ribosomal subunit. Forms a cluster with proteins L14 and L19. Methylated by PrmB.

Functionally, one of the primary rRNA binding proteins, it binds directly near the 3'-end of the 23S rRNA, where it nucleates assembly of the 50S subunit. The polypeptide is Large ribosomal subunit protein uL3 (Burkholderia ambifaria (strain MC40-6)).